A 409-amino-acid polypeptide reads, in one-letter code: Single Ig IL-1-related receptor (409 aa).

Residues 1–117 (MAGVCDMAPN…TLWRAGPAGH (117 aa)) are Extracellular-facing. Residues 9 to 108 (PNFLSPSEDQ…VWNVSSHSFT (100 aa)) form the Ig-like C2-type domain. N-linked (GlcNAc...) asparagine glycans are attached at residues asparagine 31, asparagine 58, asparagine 73, asparagine 85, and asparagine 101. A disulfide bridge links cysteine 32 with cysteine 97. Residues 118-138 (VAAVLASLLVLVVLLLVALLY) traverse the membrane as a helical; Signal-anchor for type III membrane protein segment. Over 139–409 (VKCRLNMLLW…FYCLVSEDDV (271 aa)) the chain is Cytoplasmic. One can recognise a TIR domain in the interval 162–306 (KLYDAYVSYS…DFWKELQLAL (145 aa)). Serine 382 is subject to Phosphoserine.

The protein belongs to the interleukin-1 receptor family. As to quaternary structure, interacts with IL1R1, IRAK1, TLR4, TLR5, TLR9 and TRAF6. Upon IL-1 stimulation found in a complex at least composed of IL1R1, SIGIRR, MYD88, IRAK1 and TRAF6. Upon stimulation with LPC found in a complex at least composed of TLR4, SIG1IR, MYD88, IRAK1 and TRAF6. Interacts with PALM3. As to expression, expressed at high levels in kidney, and at moderate levels in colon, small intestine, lung, spleen and liver. Not expressed in brain and muscle. Expressed at high levels in epithelial cells, at moderate levels in splenocytes, and at low or undetectable levels in fibroblasts or endothelial cells. Expressed in mucosal and dendritic cells.

The protein localises to the membrane. In terms of biological role, acts as a negative regulator of the Toll-like and IL-1R receptor signaling pathways. Attenuates the recruitment of receptor-proximal signaling components to the TLR4 receptor, probably through an TIR-TIR domain interaction with TLR4. Through its extracellular domain interferes with the heterodimerization of Il1R1 and IL1RAP. In Mus musculus (Mouse), this protein is Single Ig IL-1-related receptor (Sigirr).